Consider the following 223-residue polypeptide: PKHD-type hydroxylase syc1482_d (223 aa).

Positions 78-176 (RVHSLLFSRY…RFACVGWVQS (99 aa)) constitute a Fe2OG dioxygenase domain. Fe cation contacts are provided by histidine 96, aspartate 98, and histidine 157. Arginine 167 contributes to the 2-oxoglutarate binding site.

The cofactor is Fe(2+). L-ascorbate serves as cofactor.

This is PKHD-type hydroxylase syc1482_d from Synechococcus sp. (strain ATCC 27144 / PCC 6301 / SAUG 1402/1) (Anacystis nidulans).